Reading from the N-terminus, the 663-residue chain is Probable rhamnogalacturonate lyase B (663 aa).

The signal sequence occupies residues 1–19 (MRLRTSLGVASACASVASA). Asparagine 27, asparagine 110, asparagine 143, asparagine 239, asparagine 285, asparagine 495, asparagine 535, asparagine 569, asparagine 597, and asparagine 638 each carry an N-linked (GlcNAc...) asparagine glycan.

Belongs to the polysaccharide lyase 4 family.

It localises to the secreted. The catalysed reaction is Endotype eliminative cleavage of L-alpha-rhamnopyranosyl-(1-&gt;4)-alpha-D-galactopyranosyluronic acid bonds of rhamnogalacturonan I domains in ramified hairy regions of pectin leaving L-rhamnopyranose at the reducing end and 4-deoxy-4,5-unsaturated D-galactopyranosyluronic acid at the non-reducing end.. In terms of biological role, pectinolytic enzymes consist of four classes of enzymes: pectin lyase, polygalacturonase, pectin methylesterase and rhamnogalacturonase. Degrades the rhamnogalacturonan I (RG-I) backbone of pectin. The chain is Probable rhamnogalacturonate lyase B (rglB) from Aspergillus flavus (strain ATCC 200026 / FGSC A1120 / IAM 13836 / NRRL 3357 / JCM 12722 / SRRC 167).